Reading from the N-terminus, the 108-residue chain is Cytochrome c6 (108 aa).

The signal sequence occupies residues 1–23 (MRLLFAFFIICHIFTNNVQLTFA). Heme c contacts are provided by Cys-37, Cys-40, His-41, and Met-81.

Belongs to the cytochrome c family. PetJ subfamily. As to quaternary structure, monomer. Post-translationally, binds 1 heme c group covalently per subunit.

It is found in the plastid. The protein localises to the chloroplast thylakoid lumen. Its function is as follows. Functions as an electron carrier between membrane-bound cytochrome b6-f and photosystem I in oxygenic photosynthesis. In Gracilaria tenuistipitata var. liui (Red alga), this protein is Cytochrome c6.